Reading from the N-terminus, the 437-residue chain is Bifunctional protein GlmU (437 aa).

Residues 1 to 223 (MHNTAVILAA…WDECRGVNSR (223 aa)) are pyrophosphorylase. UDP-N-acetyl-alpha-D-glucosamine-binding positions include 8 to 11 (LAAG), Lys-22, Gln-70, 75 to 76 (GT), 96 to 98 (YGD), Gly-135, Glu-149, Asn-164, and Asn-221. Asp-98 lines the Mg(2+) pocket. Residue Asn-221 participates in Mg(2+) binding. A linker region spans residues 224–244 (AELAAAEAAMQSRLRAAALAA). The interval 245 to 437 (GVTMTAPETV…AELRMTKGKR (193 aa)) is N-acetyltransferase. Positions 310 and 328 each coordinate UDP-N-acetyl-alpha-D-glucosamine. Catalysis depends on His-340, which acts as the Proton acceptor. UDP-N-acetyl-alpha-D-glucosamine contacts are provided by Tyr-343 and Asn-354. Acetyl-CoA-binding positions include Ala-357, 363-364 (NY), Ser-382, Ala-400, and Arg-417.

In the N-terminal section; belongs to the N-acetylglucosamine-1-phosphate uridyltransferase family. The protein in the C-terminal section; belongs to the transferase hexapeptide repeat family. In terms of assembly, homotrimer. The cofactor is Mg(2+).

The protein localises to the cytoplasm. It catalyses the reaction alpha-D-glucosamine 1-phosphate + acetyl-CoA = N-acetyl-alpha-D-glucosamine 1-phosphate + CoA + H(+). The catalysed reaction is N-acetyl-alpha-D-glucosamine 1-phosphate + UTP + H(+) = UDP-N-acetyl-alpha-D-glucosamine + diphosphate. It participates in nucleotide-sugar biosynthesis; UDP-N-acetyl-alpha-D-glucosamine biosynthesis; N-acetyl-alpha-D-glucosamine 1-phosphate from alpha-D-glucosamine 6-phosphate (route II): step 2/2. Its pathway is nucleotide-sugar biosynthesis; UDP-N-acetyl-alpha-D-glucosamine biosynthesis; UDP-N-acetyl-alpha-D-glucosamine from N-acetyl-alpha-D-glucosamine 1-phosphate: step 1/1. It functions in the pathway bacterial outer membrane biogenesis; LPS lipid A biosynthesis. Functionally, catalyzes the last two sequential reactions in the de novo biosynthetic pathway for UDP-N-acetylglucosamine (UDP-GlcNAc). The C-terminal domain catalyzes the transfer of acetyl group from acetyl coenzyme A to glucosamine-1-phosphate (GlcN-1-P) to produce N-acetylglucosamine-1-phosphate (GlcNAc-1-P), which is converted into UDP-GlcNAc by the transfer of uridine 5-monophosphate (from uridine 5-triphosphate), a reaction catalyzed by the N-terminal domain. The polypeptide is Bifunctional protein GlmU (Acidiphilium cryptum (strain JF-5)).